Reading from the N-terminus, the 210-residue chain is Thymidylate kinase (210 aa).

An ATP-binding site is contributed by 16-23 (GGDGVGKS).

The protein belongs to the thymidylate kinase family.

It carries out the reaction dTMP + ATP = dTDP + ADP. In terms of biological role, phosphorylation of dTMP to form dTDP in both de novo and salvage pathways of dTTP synthesis. The protein is Thymidylate kinase of Leifsonia xyli subsp. xyli (strain CTCB07).